The following is a 318-amino-acid chain: Methionyl-tRNA formyltransferase (318 aa).

112 to 115 (SILP) contacts (6S)-5,6,7,8-tetrahydrofolate.

This sequence belongs to the Fmt family.

The enzyme catalyses L-methionyl-tRNA(fMet) + (6R)-10-formyltetrahydrofolate = N-formyl-L-methionyl-tRNA(fMet) + (6S)-5,6,7,8-tetrahydrofolate + H(+). In terms of biological role, attaches a formyl group to the free amino group of methionyl-tRNA(fMet). The formyl group appears to play a dual role in the initiator identity of N-formylmethionyl-tRNA by promoting its recognition by IF2 and preventing the misappropriation of this tRNA by the elongation apparatus. This chain is Methionyl-tRNA formyltransferase, found in Shewanella sp. (strain W3-18-1).